Reading from the N-terminus, the 332-residue chain is MNSTHHHGMYTSLHLWNRSSYGLHGNASESLGKGHPDGGCYEQLFVSPEVFVTLGVISLLENILVIVAIAKNKNLHSPMYFFICSLAVADMLVSVSNGSETIVITLLNSTDTDAQSFTVNIDNVIDSVICSSLLASICSLLSIAVDRYFTIFYALQYHNIMTVRRVGIIISCIWAACTVSGVLFIIYSDSSAVIICLISMFFTMLVLMASLYVHMFLMARLHIKRIAVLPGTGTIRQGTNMKGAITLTILIGVFVVCWAPFFLHLLFYISCPQNPYCVCFMSHFNLYLILIMCNAVIDPLIYALRSQELRKTFKEIICFYPLGGICELSSRY.

Residues 1-43 (MNSTHHHGMYTSLHLWNRSSYGLHGNASESLGKGHPDGGCYEQ) are Extracellular-facing. N-linked (GlcNAc...) asparagine glycosylation is found at N2, N17, and N26. Cystine bridges form between C40-C279 and C271-C277. Residues 44 to 69 (LFVSPEVFVTLGVISLLENILVIVAI) traverse the membrane as a helical segment. Residues 70 to 81 (AKNKNLHSPMYF) are Cytoplasmic-facing. The helical transmembrane segment at 82–106 (FICSLAVADMLVSVSNGSETIVITL) threads the bilayer. E100 provides a ligand contact to Ca(2+). Residues 107 to 123 (LNSTDTDAQSFTVNIDN) lie on the Extracellular side of the membrane. N108 is a glycosylation site (N-linked (GlcNAc...) asparagine). Residues D122 and D126 each contribute to the Ca(2+) site. The chain crosses the membrane as a helical span at residues 124-145 (VIDSVICSSLLASICSLLSIAV). Residues 146–165 (DRYFTIFYALQYHNIMTVRR) lie on the Cytoplasmic side of the membrane. The chain crosses the membrane as a helical span at residues 166–186 (VGIIISCIWAACTVSGVLFII). The Extracellular portion of the chain corresponds to 187-191 (YSDSS). The helical transmembrane segment at 192 to 215 (AVIICLISMFFTMLVLMASLYVHM) threads the bilayer. Topologically, residues 216–248 (FLMARLHIKRIAVLPGTGTIRQGTNMKGAITLT) are cytoplasmic. The helical transmembrane segment at 249–271 (ILIGVFVVCWAPFFLHLLFYISC) threads the bilayer. Topologically, residues 272 to 280 (PQNPYCVCF) are extracellular. Residues 281–304 (MSHFNLYLILIMCNAVIDPLIYAL) traverse the membrane as a helical segment. Residues 305–332 (RSQELRKTFKEIICFYPLGGICELSSRY) lie on the Cytoplasmic side of the membrane. C318 carries S-palmitoyl cysteine lipidation.

The protein belongs to the G-protein coupled receptor 1 family. In terms of assembly, homodimer; disulfide-linked, also forms higher order oligomers. Interacts with GNAS. Interacts with ATRNL1. Interacts with MGRN1; this interaction competes with GNAS-binding and thus inhibits agonist-induced cAMP production. Interacts with MRAP and MRAP2; these associated factors increase ligand-sensitivity and generation of cAMP.

It is found in the cell membrane. Its function is as follows. Hormone receptor that acts as a key component of the leptin-melanocortin pathway at the intersection of homeostatic maintenance of energetic state. Plays a role in regulating food intake: activation by a stimulating hormone such as anorexigenic alpha-melanocyte stimulating hormone (alpha-MSH) inhibits appetite, whereas binding to a natural antagonist like Agouti-related protein/AGRP promotes appetite. G-protein-coupled receptor that activates conventional Galphas signaling leading to induction of anorexogenic signaling in the hypothalamus to result in negative energy balance. Regulates the firing activity of neurons from the hypothalamus by alpha-MSH and AGRP independently of Galphas signaling by ligand-induced coupling of closure of inwardly rectifying potassium channel KCNJ13. In intestinal epithelial cells, plays a role in the inhibition of hepatic glucose production via nesfatin-1/NUCB2 leading to increased cyclic adenosine monophosphate (cAMP) levels and glucagon-like peptide 1 (GLP-1) secretion in the intestinal epithelium. The chain is Melanocortin receptor 4 (Mc4r) from Mus musculus (Mouse).